The primary structure comprises 92 residues: Putative pterin-4-alpha-carbinolamine dehydratase (92 aa).

It belongs to the pterin-4-alpha-carbinolamine dehydratase family.

It catalyses the reaction (4aS,6R)-4a-hydroxy-L-erythro-5,6,7,8-tetrahydrobiopterin = (6R)-L-erythro-6,7-dihydrobiopterin + H2O. This chain is Putative pterin-4-alpha-carbinolamine dehydratase, found in Cereibacter sphaeroides (strain ATCC 17023 / DSM 158 / JCM 6121 / CCUG 31486 / LMG 2827 / NBRC 12203 / NCIMB 8253 / ATH 2.4.1.) (Rhodobacter sphaeroides).